Consider the following 407-residue polypeptide: Negative RAS protein regulator protein (407 aa).

3 disordered regions span residues 51 to 94, 165 to 187, and 241 to 273; these read PRII…ARQI, HPSKKSKQKKKKSKQEAGSNLNF, and NNNNNNINNSNNSNNNNSNNINRNSNHSTNVFS. Over residues 55–73 the composition is skewed to low complexity; the sequence is SSSNSNSNSNSNSNSNSNS. The region spanning 90–158 is the Myb-like domain; it reads SARQIRKKWK…QCHDRFKVLY (69 aa). Basic residues predominate over residues 165–177; sequence HPSKKSKQKKKKS. A compositionally biased stretch (low complexity) spans 241–270; sequence NNNNNNINNSNNSNNNNSNNINRNSNHSTN.

Its subcellular location is the nucleus. Negative regulator of the Ras-cyclic AMP pathway. Negatively regulate the activity of normal but not mutationally activated Ras proteins. The down-regulatory effect of RPI1 requires the presence of one of the two Ras GTPase activators, IRA1 and IRA2. The protein is Negative RAS protein regulator protein (RPI1) of Saccharomyces cerevisiae (strain ATCC 204508 / S288c) (Baker's yeast).